Here is a 258-residue protein sequence, read N- to C-terminus: Glutamate racemase (258 aa).

Residues 11-12 and 43-44 each bind substrate; these read DS and YG. Cys-74 functions as the Proton donor/acceptor in the catalytic mechanism. Residue 75–76 coordinates substrate; sequence NT. Cys-187 serves as the catalytic Proton donor/acceptor. 188 to 189 is a substrate binding site; it reads TH.

The protein belongs to the aspartate/glutamate racemases family.

It carries out the reaction L-glutamate = D-glutamate. Its pathway is cell wall biogenesis; peptidoglycan biosynthesis. Its function is as follows. Provides the (R)-glutamate required for cell wall biosynthesis. In Bifidobacterium animalis subsp. lactis (strain AD011), this protein is Glutamate racemase.